Reading from the N-terminus, the 388-residue chain is Succinate--CoA ligase [ADP-forming] subunit beta (388 aa).

Residues 9–236 (KKLFAEHGVP…VAAVDPLEQK (228 aa)) enclose the ATP-grasp domain. Residues lysine 45, 52–54 (GRG), glutamate 91, serine 94, and glutamate 99 contribute to the ATP site. Asparagine 191 and aspartate 205 together coordinate Mg(2+). Substrate contacts are provided by residues asparagine 256 and 318–320 (GIT).

This sequence belongs to the succinate/malate CoA ligase beta subunit family. Heterotetramer of two alpha and two beta subunits. Mg(2+) is required as a cofactor.

The catalysed reaction is succinate + ATP + CoA = succinyl-CoA + ADP + phosphate. It catalyses the reaction GTP + succinate + CoA = succinyl-CoA + GDP + phosphate. It functions in the pathway carbohydrate metabolism; tricarboxylic acid cycle; succinate from succinyl-CoA (ligase route): step 1/1. Its function is as follows. Succinyl-CoA synthetase functions in the citric acid cycle (TCA), coupling the hydrolysis of succinyl-CoA to the synthesis of either ATP or GTP and thus represents the only step of substrate-level phosphorylation in the TCA. The beta subunit provides nucleotide specificity of the enzyme and binds the substrate succinate, while the binding sites for coenzyme A and phosphate are found in the alpha subunit. In Frankia casuarinae (strain DSM 45818 / CECT 9043 / HFP020203 / CcI3), this protein is Succinate--CoA ligase [ADP-forming] subunit beta.